We begin with the raw amino-acid sequence, 263 residues long: MSQLLSTPLMAVNSNPRFLSSSSVLVTGGFAVKRHGFALKPTTKTVKLFSVKSRQTDYFEKQRFGDSSSSPSPAEGLPARFYVGHSIYKGKAALTVDPRAPEFVALDSGAFKLSKDGFLLLQFAPSAGVRQYDWSKKQVFSLSVTEIGTLVSLGPRESCEFFHDPFKGKSDEGKVRKVLKVEPLPDGSGHFFNLSVQNKLVNVDESIYIPITRAEFAVLISAFNFVLPYLIGWHAFANSIKPEETSRVNNASPNYGGDYEWNR.

Residues Met1–Lys47 constitute a chloroplast transit peptide. The interval Lys89 to Leu94 is required for ssDNA binding. The short motif at Lys167–Lys180 is the Nuclear localization signal element.

It belongs to the Whirly family. As to quaternary structure, homotetramer.

The protein resides in the plastid. It is found in the chloroplast. It localises to the nucleus. In terms of biological role, single-stranded DNA-binding protein that functions in both chloroplasts and nucleus. In chloroplasts, maintains plastid genome stability by preventing break-induced and short homology-dependent illegitimate recombinations. In nucleus, modulates telomere length homeostasis by inhibiting the action of the telomerase at the extreme termini of chromosomes. Is recruited to a distal element upstream of the kinesin KP1 to mediate the transcriptional repression of KP1. Is required for full salicylic acid-dependent plant disease resistance responses. Can bind double-stranded DNA in vivo. The sequence is that of Single-stranded DNA-binding protein WHY1, chloroplastic (WHY1) from Arabidopsis thaliana (Mouse-ear cress).